Consider the following 235-residue polypeptide: Leucyl/phenylalanyl-tRNA--protein transferase (235 aa).

Belongs to the L/F-transferase family.

Its subcellular location is the cytoplasm. It catalyses the reaction N-terminal L-lysyl-[protein] + L-leucyl-tRNA(Leu) = N-terminal L-leucyl-L-lysyl-[protein] + tRNA(Leu) + H(+). The enzyme catalyses N-terminal L-arginyl-[protein] + L-leucyl-tRNA(Leu) = N-terminal L-leucyl-L-arginyl-[protein] + tRNA(Leu) + H(+). The catalysed reaction is L-phenylalanyl-tRNA(Phe) + an N-terminal L-alpha-aminoacyl-[protein] = an N-terminal L-phenylalanyl-L-alpha-aminoacyl-[protein] + tRNA(Phe). Functions in the N-end rule pathway of protein degradation where it conjugates Leu, Phe and, less efficiently, Met from aminoacyl-tRNAs to the N-termini of proteins containing an N-terminal arginine or lysine. The polypeptide is Leucyl/phenylalanyl-tRNA--protein transferase (Cellvibrio japonicus (strain Ueda107) (Pseudomonas fluorescens subsp. cellulosa)).